A 279-amino-acid chain; its full sequence is uncharacterized protein (279 aa).

Belongs to the PhzF family.

This is an uncharacterized protein from Vibrio cholerae serotype O1 (strain ATCC 39315 / El Tor Inaba N16961).